The primary structure comprises 903 residues: MLIPSKLSRPVRLQNTVIRDRLLVKLSGVANYRLTLINCPAGYGKTTLIAQWAADQSDLGWYSLDESDNQPERFATYLVAAIQLATGGHCSKSEAISQKHQYASLSALFAQLFIELSEWDGPLYLVIDDYHLITNDAIHEAMRFFLRHQPENLTLIMLSRTLPPLGIANLRVRDQLLELGMQQLAFNHQEAQQFFDCRLSVPLEQGDSSRLCDEVEGWATALQLIALSSRQPNSSAQKSAKRLAGLNASHLSDYLVDEVLDQVDSDARAFLLRCSVLRSMNDALIVRLTGEDNGQQRLEELERQGLFIHRMDDSGEWFCFHPLFATFLRQRCQWEMALELPELHHAAAEGWMALGYPAEAIHHALAAGDVGMLRDILLQHAWTLFNHSELALLEQCLVALPYSLLVQNPELALLQAWLAQSQHRYGEVNTLLERAESAMQERKIPIDEILRAEFDALRAQVAINAGKPEEAEKLATDALKYLPMANFYSRIVATSVTGEVHHCKGELSRALPMMQQTEQMARRHEAYHYALWALLQQSEILIAQGFLQAAYETQDKAFDLIHEQHLEQLPMHEFLLRIRSQVLWSWSRLDEAEEAARKGIEILVNYQPQQQLQCLAMLAKCSLARGDLDNANMYIQRCEALQHGSQYHLDWITNADKPRVIHWQMTGDKAAAANWLRQAEKPGMADNHFLQGQWRNIARIQIMLGRFNEAEVVLDELNENARRLRLTSDLNRNLLLSNILYWQTERKSEAQKALIESLSLANRTGFISHFVIEGEVMAQQLRQLIQLNALPELEQHRAQRILKDINQHHRHKFAHFDEIFVDKLLTHPQVPELIRTSPLTQREWQVLGLIYSGYSNDQIAGELEVAATTIKTHIRNLYQKLGVAHRQDAVQQAQRLLQMMGYV.

39–46 (CPAGYGKT) provides a ligand contact to ATP. Residues 832 to 897 (ELIRTSPLTQ…DAVQQAQRLL (66 aa)) form the HTH luxR-type domain. Positions 856–875 (NDQIAGELEVAATTIKTHIR) form a DNA-binding region, H-T-H motif.

This sequence belongs to the MalT family. As to quaternary structure, monomer in solution. Oligomerizes to an active state in the presence of the positive effectors ATP and maltotriose.

With respect to regulation, activated by ATP and maltotriose, which are both required for DNA binding. In terms of biological role, positively regulates the transcription of the maltose regulon whose gene products are responsible for uptake and catabolism of malto-oligosaccharides. Specifically binds to the promoter region of its target genes, recognizing a short DNA motif called the MalT box. The sequence is that of HTH-type transcriptional regulator MalT from Yersinia enterocolitica serotype O:8 / biotype 1B (strain NCTC 13174 / 8081).